The sequence spans 184 residues: Phosphorelay intermediate protein YPD1 (184 aa).

Residues 30 to 125 form the HPt domain; the sequence is EEGFSKSLVE…SAENVAVNDG (96 aa). Histidine 69 is subject to Phosphohistidine. The segment at 120–152 is disordered; sequence VAVNDGETNPENGSNGNETSNNKTNTSNIPDES. Over residues 125–147 the composition is skewed to low complexity; the sequence is GETNPENGSNGNETSNNKTNTSN.

It belongs to the YPD1 family.

It localises to the cytoplasm. The protein resides in the nucleus. Its function is as follows. Phosphorelay intermediate protein that is part of the bifurcated SLN1-YPD1-SKN7/SSK1 two-component regulatory system, which controls activity of the HOG1 pathway and gene expression in response to oxidative stress and probably to changes in the osmolarity of the extracellular environment. Catalyzes the phosphoryl group transfer from the membrane-bound histidine kinase SLN1 to two distinct response regulators SSK1 and SKN7. The sequence is that of Phosphorelay intermediate protein YPD1 (YPD1) from Candida albicans (strain SC5314 / ATCC MYA-2876) (Yeast).